We begin with the raw amino-acid sequence, 868 residues long: Muscle, skeletal receptor tyrosine-protein kinase (868 aa).

An N-terminal signal peptide occupies residues 1–21; it reads MRELVNIPLLQMLTLVAFSGT. Over 22–494 the chain is Extracellular; sequence EKLPKAPVIT…FAVSPAYSMT (473 aa). Ig-like domains are found at residues 28–116, 121–205, and 212–302; these read PVIT…GALQ, PKIT…KLVK, and ARIL…ATVS. Disulfide bonds link C49/C99, C98/C112, and C142/C190. N222 is a glycosylation site (N-linked (GlcNAc...) asparagine). Cystine bridges form between C233–C282, C317–C382, C325–C375, C366–C406, C394–C447, and C398–C434. One can recognise an FZ domain in the interval 312 to 450; that stretch reads DSQGYCAQYR…HRDPTACTRL (139 aa). N338 carries an N-linked (GlcNAc...) asparagine glycan. N459 carries an N-linked (GlcNAc...) asparagine glycan. The chain crosses the membrane as a helical span at residues 495–515; the sequence is VIISIVSSFALFALLTIATLY. Topologically, residues 516 to 868 are cytoplasmic; it reads CCRRRKEWKN…CERAEGTVGV (353 aa). A Phosphotyrosine; by autocatalysis modification is found at Y553. In terms of domain architecture, Protein kinase spans 574–855; that stretch reads IEYVRDIGEG…PSFCSIHRIL (282 aa). Residues 580–588 and K608 each bind ATP; that span reads IGEGAFGRV. 2 positions are modified to phosphoserine; by CK2: S680 and S697. Residue D724 is the Proton acceptor of the active site. Phosphotyrosine; by autocatalysis is present on Y754.

The protein belongs to the protein kinase superfamily. Tyr protein kinase family. Monomer. Homodimer. Interacts with LRP4; the heterodimer forms an AGRIN receptor complex that binds AGRIN resulting in activation of MUSK. Forms a heterotetramer composed of 2 DOK7 and 2 MUSK molecules which facilitates MUSK trans-autophosphorylation on tyrosine residue and activation. Interacts (via cytoplasmic part) with DOK7 (via IRS-type PTB domain); requires MUSK phosphorylation. Interacts with DVL1 (via DEP domain); the interaction is direct and mediates the formation of a DVL1, MUSK and PAK1 ternary complex involved in AChR clustering. Interacts with PDZRN3; this interaction is enhanced by agrin. Interacts with FNTA; the interaction is direct and mediates AGRIN-induced phosphorylation and activation of FNTA. Interacts with CSNK2B; mediates regulation by CK2. Interacts (via the cytoplasmic domain) with DNAJA3. Interacts with NSF; may regulate MUSK endocytosis and activity. Interacts with CAV3; may regulate MUSK signaling. Interacts with RNF31. Mg(2+) serves as cofactor. Post-translationally, ubiquitinated by PDZRN3. Ubiquitination promotes endocytosis and lysosomal degradation. In terms of processing, phosphorylated. Phosphorylation is induced by AGRIN. Autophosphorylated. Autophosphorylation at Tyr-553 is required for interaction with DOK7 which in turn stimulates the phosphorylation and the activation of MUSK. Neddylated. Expressed preferentially in skeletal muscle.

It localises to the postsynaptic cell membrane. It catalyses the reaction L-tyrosyl-[protein] + ATP = O-phospho-L-tyrosyl-[protein] + ADP + H(+). Positively regulated by CK2. Receptor tyrosine kinase which plays a central role in the formation and the maintenance of the neuromuscular junction (NMJ), the synapse between the motor neuron and the skeletal muscle. Recruitment of AGRIN by LRP4 to the MUSK signaling complex induces phosphorylation and activation of MUSK, the kinase of the complex. The activation of MUSK in myotubes regulates the formation of NMJs through the regulation of different processes including the specific expression of genes in subsynaptic nuclei, the reorganization of the actin cytoskeleton and the clustering of the acetylcholine receptors (AChR) in the postsynaptic membrane. May regulate AChR phosphorylation and clustering through activation of ABL1 and Src family kinases which in turn regulate MUSK. DVL1 and PAK1 that form a ternary complex with MUSK are also important for MUSK-dependent regulation of AChR clustering. May positively regulate Rho family GTPases through FNTA. Mediates the phosphorylation of FNTA which promotes prenylation, recruitment to membranes and activation of RAC1 a regulator of the actin cytoskeleton and of gene expression. Other effectors of the MUSK signaling include DNAJA3 which functions downstream of MUSK. May also play a role within the central nervous system by mediating cholinergic responses, synaptic plasticity and memory formation. The chain is Muscle, skeletal receptor tyrosine-protein kinase (Musk) from Mus musculus (Mouse).